The chain runs to 870 residues: DNA mismatch repair protein MutS (870 aa).

622–629 (GPNMGGKS) provides a ligand contact to ATP.

The protein belongs to the DNA mismatch repair MutS family.

In terms of biological role, this protein is involved in the repair of mismatches in DNA. It is possible that it carries out the mismatch recognition step. This protein has a weak ATPase activity. This chain is DNA mismatch repair protein MutS, found in Methylibium petroleiphilum (strain ATCC BAA-1232 / LMG 22953 / PM1).